The primary structure comprises 121 residues: Large ribosomal subunit protein uL14 (121 aa).

This sequence belongs to the universal ribosomal protein uL14 family. In terms of assembly, part of the 50S ribosomal subunit. Forms a cluster with proteins L3 and L19. In the 70S ribosome, L14 and L19 interact and together make contacts with the 16S rRNA in bridges B5 and B8.

Functionally, binds to 23S rRNA. Forms part of two intersubunit bridges in the 70S ribosome. This chain is Large ribosomal subunit protein uL14, found in Aquifex aeolicus (strain VF5).